The following is a 276-amino-acid chain: NH(3)-dependent NAD(+) synthetase (276 aa).

ATP is bound at residue 43–50 (GISGGVDS). D49 is a binding site for Mg(2+). R146 provides a ligand contact to deamido-NAD(+). An ATP-binding site is contributed by T166. E171 is a binding site for Mg(2+). Deamido-NAD(+) is bound by residues K179 and D186. Residues K195 and T217 each coordinate ATP. 266 to 267 (HK) contributes to the deamido-NAD(+) binding site.

This sequence belongs to the NAD synthetase family. In terms of assembly, homodimer.

It carries out the reaction deamido-NAD(+) + NH4(+) + ATP = AMP + diphosphate + NAD(+) + H(+). It participates in cofactor biosynthesis; NAD(+) biosynthesis; NAD(+) from deamido-NAD(+) (ammonia route): step 1/1. In terms of biological role, catalyzes the ATP-dependent amidation of deamido-NAD to form NAD. Uses ammonia as a nitrogen source. In Shewanella sediminis (strain HAW-EB3), this protein is NH(3)-dependent NAD(+) synthetase.